The primary structure comprises 188 residues: F-box only protein 36 (188 aa).

Residues 91–137 (FDFLERLSDDLLLTIISYLDLEDIARLCQTSHRFAKLCMSDKLWEQI) form the F-box domain.

As to quaternary structure, directly interacts with SKP1 and CUL1.

Substrate-recognition component of the SCF (SKP1-CUL1-F-box protein)-type E3 ubiquitin ligase complex. In Homo sapiens (Human), this protein is F-box only protein 36 (FBXO36).